The sequence spans 336 residues: MIKAYAALEANGKLQPFEYDPGALGANEVEIEVQYCGVCHSDLSMINNEWGISNYPLVPGHEVVGTVAAMGEGVNHVEVGDLVGLGWHSGYCMTCHSCLSGYHNLCATAESTIVGHYGGFGDRVRAKGVSVVKLPKGIDLASAGPLFCGGITVFSPMVELSLKPTAKVAVIGIGGLGHLAVQFLRAWGCEVTAFTSSARKQTEVLELGAHHILDSTNPEAIASAEGKFDYIISTVNLKLDWNLYISTLAPQGHFHFVGVVLEPLDLNLFPLLMGQRSVSASPVGSPATIATMLDFAVRHDIKPVVEQFSFDQINEAIAHLESGKAHYRVVLSHSKN.

Positions 36, 39, 61, 92, 95, 98, 106, and 148 each coordinate Zn(2+).

Belongs to the zinc-containing alcohol dehydrogenase family. As to quaternary structure, homotetramer. It depends on Zn(2+) as a cofactor.

It is found in the cytoplasm. The enzyme catalyses a primary alcohol + NADP(+) = an aldehyde + NADPH + H(+). Active on a wide variety of primary alcohols and their corresponding aldehydes, but not against ketones nor secondary alcohols. Active on aliphatic compounds up to 5 carbons in length and aromatic alcohols, less effective on branched-chain primary alcohols. Prefers NADPH to NADH. Its catalytic efficiency is greatest for aldehydes, suggesting the reduction of aromatic and medium-chain aliphatic aldehydes is its in vivo activity. Plays a role in tolerance to internally produced ethanol. The polypeptide is Aldehyde reductase AdhA (Synechocystis sp. (strain ATCC 27184 / PCC 6803 / Kazusa)).